The sequence spans 110 residues: Large ribosomal subunit protein uL22 (110 aa).

The protein belongs to the universal ribosomal protein uL22 family. As to quaternary structure, part of the 50S ribosomal subunit.

In terms of biological role, this protein binds specifically to 23S rRNA; its binding is stimulated by other ribosomal proteins, e.g. L4, L17, and L20. It is important during the early stages of 50S assembly. It makes multiple contacts with different domains of the 23S rRNA in the assembled 50S subunit and ribosome. Its function is as follows. The globular domain of the protein is located near the polypeptide exit tunnel on the outside of the subunit, while an extended beta-hairpin is found that lines the wall of the exit tunnel in the center of the 70S ribosome. This Photobacterium profundum (strain SS9) protein is Large ribosomal subunit protein uL22.